The following is a 130-amino-acid chain: T-cell receptor beta chain V region A20.2.25 (130 aa).

The signal sequence occupies residues 1–21 (MSCRLLLYVSLCLVETALMNT). A v segment region spans residues 22-112 (KITQSPRYLI…DSAVYFCASS (91 aa)). 2 N-linked (GlcNAc...) asparagine glycosylation sites follow: N36 and N75. The segment at 113–115 (HGE) is d segment. The interval 116–130 (NTEVFFGKGTTLTVV) is j segment.

The chain is T-cell receptor beta chain V region A20.2.25 from Mus musculus (Mouse).